Here is a 447-residue protein sequence, read N- to C-terminus: Phosphoglucosamine mutase (447 aa).

Ser102 serves as the catalytic Phosphoserine intermediate. Residues Ser102, Asp241, Asp243, and Asp245 each coordinate Mg(2+). Phosphoserine is present on Ser102.

Belongs to the phosphohexose mutase family. The cofactor is Mg(2+). In terms of processing, activated by phosphorylation.

The enzyme catalyses alpha-D-glucosamine 1-phosphate = D-glucosamine 6-phosphate. Catalyzes the conversion of glucosamine-6-phosphate to glucosamine-1-phosphate. The sequence is that of Phosphoglucosamine mutase from Pseudomonas savastanoi pv. phaseolicola (strain 1448A / Race 6) (Pseudomonas syringae pv. phaseolicola (strain 1448A / Race 6)).